Here is a 256-residue protein sequence, read N- to C-terminus: Nuclear shuttle protein (256 aa).

The short motif at asparagine 18–arginine 39 is the Bipartite nuclear localization signal element. The Nuclear localization signal signature appears at serine 81–leucine 96. Positions glutamate 150–aspartate 187 are interaction with Arabidopsis thaliana NSI protein.

It belongs to the begomovirus nuclear shuttle protein family. As to quaternary structure, binds to single-stranded and double-stranded viral DNA. Interacts with the host nuclear shuttle interacting (NSI) protein. This interaction may allow NSP to recruit NSI monomers to the viral genome and thus regulate nuclear export of viral genome by NSP.

The protein localises to the host nucleus. The protein resides in the host cytoplasm. It is found in the host cell membrane. Its function is as follows. Binds to the genomic viral ssDNA, shuttles it into and out of the cell nucleus. Begomoviruses use 2 proteins to transport their DNA from cell to cell. The nuclear shuttle protein (NSP) shuttles it between nucleus and cytoplasm and the movement protein (MP) probably transports the DNA-NSP complex to the cell periphery and facilitates movement across the cell wall. In Hewittia sublobata (Coralbush), this protein is Nuclear shuttle protein.